The following is a 597-amino-acid chain: Gigaxonin (597 aa).

The region spanning 30–99 (CDAHLVLDGE…IFSGQIRLNE (70 aa)) is the BTB domain. The 103-residue stretch at 134-236 (CIGIRDFALH…DSSYLREQML (103 aa)) folds into the BACK domain. Kelch repeat units lie at residues 274 to 326 (CIVT…SAEG), 327 to 374 (FLFV…EIDG), 376 to 421 (LYIL…AMKK), 422 to 468 (KIYA…GVAM), 470 to 522 (LYVF…VYGA), and 528 to 574 (SIYV…AALR).

As to quaternary structure, interacts with TBCB. Interacts with CUL3. Part of a complex that contains CUL3, RBX1 and GAN. Interacts (via BTB domain) with UBA1. Interacts (via Kelch domains) with MAP1B (via C-terminus) and MAP1S (via C-terminus). Post-translationally, ubiquitinated by E3 ubiquitin ligase complex formed by CUL3 and RBX1 and probably targeted for proteasome-independent degradation. As to expression, expressed in brain, heart and muscle (at protein level).

The protein localises to the cytoplasm. Its subcellular location is the cytoskeleton. It participates in protein modification; protein ubiquitination. Functionally, probable cytoskeletal component that directly or indirectly plays an important role in neurofilament architecture. May act as a substrate-specific adapter of an E3 ubiquitin-protein ligase complex which mediates the ubiquitination and subsequent proteasomal degradation of target proteins. Controls degradation of TBCB. Controls degradation of MAP1B and MAP1S, and is critical for neuronal maintenance and survival. This chain is Gigaxonin, found in Mus musculus (Mouse).